The primary structure comprises 544 residues: Methionine--tRNA ligase 1 (544 aa).

Positions 10-20 (PYANGSLHLGH) match the 'HIGH' region motif. Zn(2+) is bound by residues C141, C144, C153, and C156. Positions 329-333 (KLSTS) match the 'KMSKS' region motif. ATP is bound at residue T332.

Belongs to the class-I aminoacyl-tRNA synthetase family. MetG type 1 subfamily. As to quaternary structure, monomer. Zn(2+) is required as a cofactor.

The protein resides in the cytoplasm. It carries out the reaction tRNA(Met) + L-methionine + ATP = L-methionyl-tRNA(Met) + AMP + diphosphate. In terms of biological role, is required not only for elongation of protein synthesis but also for the initiation of all mRNA translation through initiator tRNA(fMet) aminoacylation. This Bacillus cereus (strain ATCC 10987 / NRS 248) protein is Methionine--tRNA ligase 1.